A 446-amino-acid polypeptide reads, in one-letter code: Probable glycine dehydrogenase (decarboxylating) subunit 1 (446 aa).

Belongs to the GcvP family. N-terminal subunit subfamily. As to quaternary structure, the glycine cleavage system is composed of four proteins: P, T, L and H. In this organism, the P 'protein' is a heterodimer of two subunits.

The enzyme catalyses N(6)-[(R)-lipoyl]-L-lysyl-[glycine-cleavage complex H protein] + glycine + H(+) = N(6)-[(R)-S(8)-aminomethyldihydrolipoyl]-L-lysyl-[glycine-cleavage complex H protein] + CO2. The glycine cleavage system catalyzes the degradation of glycine. The P protein binds the alpha-amino group of glycine through its pyridoxal phosphate cofactor; CO(2) is released and the remaining methylamine moiety is then transferred to the lipoamide cofactor of the H protein. The protein is Probable glycine dehydrogenase (decarboxylating) subunit 1 of Coxiella burnetii (strain CbuK_Q154) (Coxiella burnetii (strain Q154)).